Here is a 546-residue protein sequence, read N- to C-terminus: Aladin (546 aa).

C2 bears the N-acetylcysteine mark. S33 carries the phosphoserine modification. WD repeat units lie at residues W149–L188, R191–R230, G243–L282, and F285–W324. A phosphoserine mark is found at S495, S511, S522, S525, and S541. Positions R500–L546 are disordered. Over residues Q534–L546 the composition is skewed to low complexity. Residues S544–L546 carry the Microbody targeting signal motif.

Interacts with NDC1, the interaction is required for nuclear pore localization. Interacts with the inactive form aurora kinase AURKA. Interacts with PGRMC2. In terms of tissue distribution, widely expressed. Particularly abundant in cerebellum, corpus callosum, adrenal gland, pituitary gland, gastrointestinal structures and fetal lung.

It is found in the nucleus. It localises to the nuclear pore complex. The protein localises to the cytoplasm. Its subcellular location is the cytoskeleton. The protein resides in the spindle pole. It is found in the nucleus envelope. Plays a role in the normal development of the peripheral and central nervous system. Required for the correct localization of aurora kinase AURKA and the microtubule minus end-binding protein NUMA1 as well as a subset of AURKA targets which ensures proper spindle formation and timely chromosome alignment. The protein is Aladin (Aaas) of Mus musculus (Mouse).